The primary structure comprises 319 residues: G-protein coupled receptor 171 (319 aa).

Residues methionine 1–phenylalanine 21 are Extracellular-facing. An N-linked (GlcNAc...) asparagine glycan is attached at asparagine 3. Residues tyrosine 22–lysine 42 traverse the membrane as a helical segment. The Cytoplasmic portion of the chain corresponds to threonine 43 to cysteine 48. Residues valine 49–valine 69 form a helical membrane-spanning segment. At lysine 70–valine 89 the chain is on the extracellular side. A helical transmembrane segment spans residues threonine 90–isoleucine 110. The Cytoplasmic segment spans residues aspartate 111–lysine 132. The chain crosses the membrane as a helical span at residues methionine 133–proline 153. The Extracellular segment spans residues isoleucine 154–asparagine 181. The helical transmembrane segment at phenylalanine 182–alanine 202 threads the bilayer. Residues isoleucine 203–histidine 224 are Cytoplasmic-facing. Residues isoleucine 225–proline 245 form a helical membrane-spanning segment. Over tyrosine 246–glutamate 268 the chain is Extracellular. Residues alanine 269 to serine 289 form a helical membrane-spanning segment. Over lysine 290–valine 319 the chain is Cytoplasmic.

The protein belongs to the G-protein coupled receptor 1 family. In terms of tissue distribution, highly expressed in hypothalamus, including the arcuate nucleus, paraventricular nucleus and dorsomedial hypothalamus. Expressed in periaqueductal gray (at protein level), found primarily in GABAergic neurons and to a lesser extent in glutamatergic neurons. Expressed in T cells and natural killer cells.

It is found in the cell membrane. G-protein coupled receptor for Big LEN, a 16-amino acid neuropeptide produced from the precursor protein, proSAAS (encoded by PCSK1N). Acts through a G(i)-alpha-mediated pathway in response to Big LEN. Big LEN-GPR171 system plays an important role in regulating feeding and metabolism. Also plays a role in modulating fear and anxiety-like behaviors in the basolateral amygdala. Big LEN-GPR171 modulates the mu-type opioid receptor signaling and antinociception. Acts as a negative regulator T cell function. This chain is G-protein coupled receptor 171 (Gpr171), found in Mus musculus (Mouse).